Consider the following 344-residue polypeptide: tRNA N6-adenosine threonylcarbamoyltransferase (344 aa).

Residues histidine 119 and histidine 123 each contribute to the Fe cation site. Residues 141 to 145 (VVSGG), aspartate 174, glycine 187, aspartate 191, and asparagine 280 each bind substrate. Aspartate 310 is a Fe cation binding site.

Belongs to the KAE1 / TsaD family. The cofactor is Fe(2+).

Its subcellular location is the cytoplasm. It carries out the reaction L-threonylcarbamoyladenylate + adenosine(37) in tRNA = N(6)-L-threonylcarbamoyladenosine(37) in tRNA + AMP + H(+). Functionally, required for the formation of a threonylcarbamoyl group on adenosine at position 37 (t(6)A37) in tRNAs that read codons beginning with adenine. Is involved in the transfer of the threonylcarbamoyl moiety of threonylcarbamoyl-AMP (TC-AMP) to the N6 group of A37, together with TsaE and TsaB. TsaD likely plays a direct catalytic role in this reaction. This Listeria monocytogenes serotype 4b (strain CLIP80459) protein is tRNA N6-adenosine threonylcarbamoyltransferase.